Reading from the N-terminus, the 59-residue chain is Putative HTH-type transcriptional regulator YneL (59 aa).

The 59-residue stretch at 1-59 (MSPLRYQKWLRLNEVRRQMLNEHYDVTTAAYAVGYESYPISVGNIRGCLESHPREILPG) folds into the HTH araC/xylS-type domain. Positions 26–49 (VTTAAYAVGYESYPISVGNIRGCL) form a DNA-binding region, H-T-H motif.

This is Putative HTH-type transcriptional regulator YneL (yneL) from Escherichia coli (strain K12).